A 529-amino-acid chain; its full sequence is Cytochrome P450 monooxygenase fsoB (529 aa).

A helical transmembrane segment spans residues 4–24 (WLLSLLIAGVVFAIFQLRTVG). Heme is bound at residue Cys436.

The protein belongs to the cytochrome P450 family. The cofactor is heme.

It is found in the membrane. Functionally, cytochrome P450 monooxygenase; part of the gene cluster that mediates the biosynthesis of the enfumafungin-type antibiotic fuscoatroside. Four enzymes are sufficient to produce fuscoatroside: the terpene cyclase-glycosyl transferase fusion protein fsoAthe cytochrome P450 monoxygenases fsoD and fsoE, and the acetyltransferase fsoF; the cytochrome P450 monooxygenase fsoB and the glucose oxidase-like protein fsoC do not seem to play a role in biosynthesis of fuscoatroside. The protein is Cytochrome P450 monooxygenase fsoB of Humicola fuscoatra.